A 481-amino-acid chain; its full sequence is Zinc metalloproteinase/disintegrin (481 aa).

Positions M1–S20 are cleaved as a signal peptide. Positions I21–P189 are excised as a propeptide. The residue at position 190 (E190) is a Pyrrolidone carboxylic acid (Glu). A Peptidase M12B domain is found at R197–P392. Residue R296–I299 participates in an L-amino acid tripeptide binding. Disulfide bonds link C308-C387, C349-C371, and C351-C354. H333 contributes to the Zn(2+) binding site. E334 is an active-site residue. Zn(2+) is bound by residues H337 and H343. S357 contributes to the an L-amino acid tripeptide binding site. Residues L393–A410 constitute a propeptide that is removed on maturation. Residues T400 to G481 enclose the Disintegrin domain. 6 disulfide bridges follow: C414–C429, C416–C424, C423–C446, C437–C443, C442–C467, and C455–C474. The short motif at R459–D461 is the Cell attachment site element.

The protein belongs to the venom metalloproteinase (M12B) family. P-II subfamily. P-IIa sub-subfamily. As to quaternary structure, monomer. Requires Zn(2+) as cofactor. Post-translationally, the N-terminus is blocked. In terms of tissue distribution, expressed by the venom gland.

Its subcellular location is the secreted. With respect to regulation, inhibited by EDTA and 1,10-phenanthroline. Is also inhibited by endogenous tripeptide inhibitors pyroGlu-Asn-Trp, pyroGlu-Gln-Trp, and pyroGlu-Lys-Trp. Its function is as follows. Potent fibrinogenolytic protease which cleaves mainly the Aalpha chain of fibrinogen (FGA) and slightly the Bbeta (FGB) and the gamma (FGG) chains. May possess hemorrhagic activity. Compared to other SVMP, the substrate-binding pocket is relatively shallow. Is less susceptible to tripeptide inhibitors than TM-1 (AC U3KRG1) and TM-2. Functionally, inhibits platelet aggregation induced by ADP, thrombin, platelet-activating factor and collagen. Acts by inhibiting fibrinogen interaction with platelet receptors GPIIb/GPIIIa (ITGA2B/ITGB3). The polypeptide is Zinc metalloproteinase/disintegrin (Protobothrops mucrosquamatus (Taiwan habu)).